Here is an 823-residue protein sequence, read N- to C-terminus: Ankyrin repeat domain-containing protein 20A1 (823 aa).

5 ANK repeats span residues glutamine 66–valine 95, glutamate 99–leucine 128, tyrosine 132–alanine 161, aspartate 165–alanine 194, and leucine 198–alanine 227. 2 disordered regions span residues valine 301–aspartate 343 and valine 355–asparagine 402. Positions glutamine 372–glutamine 384 are enriched in basic and acidic residues. 3 coiled-coil regions span residues lysine 431–glutamate 480, glutamate 565–threonine 724, and leucine 776–glutamate 805.

The polypeptide is Ankyrin repeat domain-containing protein 20A1 (ANKRD20A1) (Homo sapiens (Human)).